The following is a 500-amino-acid chain: ADP,ATP carrier protein 5 (500 aa).

A run of 11 helical transmembrane segments spans residues leucine 26–leucine 46, isoleucine 62–tyrosine 82, isoleucine 94–tyrosine 114, tyrosine 149–tryptophan 169, phenylalanine 184–methionine 204, isoleucine 224–leucine 244, leucine 287–valine 307, leucine 328–methionine 348, alanine 357–phenylalanine 377, isoleucine 381–glycine 401, and serine 469–valine 489.

This sequence belongs to the ADP/ATP translocase tlc family.

The protein resides in the cell membrane. In terms of biological role, provides the rickettsial cell with host ATP in exchange for rickettsial ADP. This is an obligate exchange system. This energy acquiring activity is an important component of rickettsial parasitism. In Rickettsia prowazekii (strain Madrid E), this protein is ADP,ATP carrier protein 5 (tlcE).